Reading from the N-terminus, the 337-residue chain is Phosphate acyltransferase (337 aa).

It belongs to the PlsX family. As to quaternary structure, homodimer. Probably interacts with PlsY.

Its subcellular location is the cytoplasm. It catalyses the reaction a fatty acyl-[ACP] + phosphate = an acyl phosphate + holo-[ACP]. It participates in lipid metabolism; phospholipid metabolism. Its function is as follows. Catalyzes the reversible formation of acyl-phosphate (acyl-PO(4)) from acyl-[acyl-carrier-protein] (acyl-ACP). This enzyme utilizes acyl-ACP as fatty acyl donor, but not acyl-CoA. The sequence is that of Phosphate acyltransferase from Polynucleobacter asymbioticus (strain DSM 18221 / CIP 109841 / QLW-P1DMWA-1) (Polynucleobacter necessarius subsp. asymbioticus).